The chain runs to 181 residues: Ribulose bisphosphate carboxylase small subunit, chloroplastic 2 (181 aa).

The N-terminal 54 residues, 1–54 (MASSMLSSAAVVTSPAQATMVAPFTGLKSSAAFPVTRKANNDITSIASNGGRVS), are a transit peptide targeting the chloroplast.

The protein belongs to the RuBisCO small chain family. As to quaternary structure, heterohexadecamer of 8 large and 8 small subunits.

It is found in the plastid. Its subcellular location is the chloroplast. Functionally, ruBisCO catalyzes two reactions: the carboxylation of D-ribulose 1,5-bisphosphate, the primary event in carbon dioxide fixation, as well as the oxidative fragmentation of the pentose substrate. Both reactions occur simultaneously and in competition at the same active site. Although the small subunit is not catalytic it is essential for maximal activity. This chain is Ribulose bisphosphate carboxylase small subunit, chloroplastic 2, found in Brassica napus (Rape).